A 108-amino-acid polypeptide reads, in one-letter code: Thiosulfate sulfurtransferase GlpE (108 aa).

A Rhodanese domain is found at 17-105 (HQGTAVLVDI…WHRHFPSEVA (89 aa)). The active-site Cysteine persulfide intermediate is the cysteine 65.

Belongs to the GlpE family.

It localises to the cytoplasm. The enzyme catalyses thiosulfate + hydrogen cyanide = thiocyanate + sulfite + 2 H(+). It carries out the reaction thiosulfate + [thioredoxin]-dithiol = [thioredoxin]-disulfide + hydrogen sulfide + sulfite + 2 H(+). Its function is as follows. Transferase that catalyzes the transfer of sulfur from thiosulfate to thiophilic acceptors such as cyanide or dithiols. May function in a CysM-independent thiosulfate assimilation pathway by catalyzing the conversion of thiosulfate to sulfite, which can then be used for L-cysteine biosynthesis. The sequence is that of Thiosulfate sulfurtransferase GlpE from Citrobacter koseri (strain ATCC BAA-895 / CDC 4225-83 / SGSC4696).